The following is a 201-amino-acid chain: Cell division protein SepF (201 aa).

The interval 1 to 94 (MALKDLFSGF…TTSKNNARNV (94 aa)) is disordered. The segment covering 13–28 (VEEEDDELEAPPEENE) has biased composition (acidic residues). Residues 35-44 (PKQQAQSQNQ) show a composition bias toward low complexity. Over residues 59–88 (SIQSVPKKQSTRLQQSSGERKYQMNNTTSK) the composition is skewed to polar residues.

This sequence belongs to the SepF family. In terms of assembly, homodimer. Interacts with FtsZ.

The protein localises to the cytoplasm. In terms of biological role, cell division protein that is part of the divisome complex and is recruited early to the Z-ring. Probably stimulates Z-ring formation, perhaps through the cross-linking of FtsZ protofilaments. Its function overlaps with FtsA. This Staphylococcus saprophyticus subsp. saprophyticus (strain ATCC 15305 / DSM 20229 / NCIMB 8711 / NCTC 7292 / S-41) protein is Cell division protein SepF.